The sequence spans 103 residues: Toluene-4-monooxygenase system, effector component (103 aa).

Belongs to the TmoD/XamoD family. As to quaternary structure, the alkene monooxygenase multicomponent enzyme system is composed of an electron transfer component and a monooxygenase component interacting with the effector protein TmoD. The electron transfer component is composed of a ferredoxin reductase (TmoF) and a ferredoxin (TmoC), and the monooxygenase component is formed by a heterohexamer (dimer of heterotrimers) of two alpha subunits (TmoA), two beta subunits (TmoE) and two gamma subunits (TmoB).

It functions in the pathway xenobiotic degradation; toluene degradation. Effector component of the toluene-4-monooxygenase multicomponent enzyme system which catalyzes the O2- and NADH-dependent hydroxylation of toluene to form p-cresol. Required for optimal efficiency and specificity of the holoenzyme. This chain is Toluene-4-monooxygenase system, effector component, found in Ectopseudomonas mendocina (Pseudomonas mendocina).